The following is a 263-amino-acid chain: Indolethylamine N-methyltransferase (263 aa).

Lys13 carries the post-translational modification N6-succinyllysine. S-adenosyl-L-methionine contacts are provided by residues Tyr20, Tyr25, 63-64, Tyr69, Asp85, and Asn90; that span reads GS. N6-succinyllysine is present on Lys96. Residues 142–143 and Leu163 contribute to the S-adenosyl-L-methionine site; that span reads DA.

Belongs to the class I-like SAM-binding methyltransferase superfamily. NNMT/PNMT/TEMT family. As to quaternary structure, monomer. Highly expressed in lung, also detected in liver and at very low levels in brain.

The protein localises to the cytoplasm. It carries out the reaction a tertiary amine + S-adenosyl-L-methionine = a methylated tertiary amine + S-adenosyl-L-homocysteine + H(+). It catalyses the reaction a secondary amine + S-adenosyl-L-methionine = a methylated secondary amine + S-adenosyl-L-homocysteine + H(+). The catalysed reaction is a primary amine + S-adenosyl-L-methionine = a methylated primary amine + S-adenosyl-L-homocysteine + H(+). The enzyme catalyses dimethyl sulfide + S-adenosyl-L-methionine = trimethylsulfonium + S-adenosyl-L-homocysteine. Its function is as follows. Catalyzes the N-methylation of tryptamine and structurally related compounds. Functions as a thioether S-methyltransferase and is active with a variety of thioethers and the corresponding selenium and tellurium compounds, including 3-methylthiopropionaldehyde, dimethyl selenide, dimethyl telluride, 2-methylthioethylamine, 2-methylthioethanol, methyl-n-propyl sulfide and diethyl sulfide. Plays an important role in the detoxification of selenium compounds. This Oryctolagus cuniculus (Rabbit) protein is Indolethylamine N-methyltransferase (INMT).